A 368-amino-acid chain; its full sequence is 4-hydroxy-3-methylbut-2-en-1-yl diphosphate synthase (flavodoxin) (368 aa).

Residues Cys-271, Cys-274, Cys-306, and Glu-313 each contribute to the [4Fe-4S] cluster site.

This sequence belongs to the IspG family. [4Fe-4S] cluster serves as cofactor.

The enzyme catalyses (2E)-4-hydroxy-3-methylbut-2-enyl diphosphate + oxidized [flavodoxin] + H2O + 2 H(+) = 2-C-methyl-D-erythritol 2,4-cyclic diphosphate + reduced [flavodoxin]. Its pathway is isoprenoid biosynthesis; isopentenyl diphosphate biosynthesis via DXP pathway; isopentenyl diphosphate from 1-deoxy-D-xylulose 5-phosphate: step 5/6. Its function is as follows. Converts 2C-methyl-D-erythritol 2,4-cyclodiphosphate (ME-2,4cPP) into 1-hydroxy-2-methyl-2-(E)-butenyl 4-diphosphate. The chain is 4-hydroxy-3-methylbut-2-en-1-yl diphosphate synthase (flavodoxin) from Mannheimia succiniciproducens (strain KCTC 0769BP / MBEL55E).